We begin with the raw amino-acid sequence, 230 residues long: Cyclin-dependent kinase inhibitor rum1 (230 aa).

Disordered stretches follow at residues 1-25 (MEPSTPPMRGLCTPSTPESPGSFKG), 43-118 (PESD…DGLY), and 188-230 (SRVP…NLLR). T13 carries the post-translational modification Phosphothreonine; by MAPK. A Phosphoserine; by MAPK modification is found at S19. Phosphothreonine; by cdc2 is present on residues T58 and T62. Residues 67 to 147 (LLPNLMLQDR…TFKPKLLFAD (81 aa)) are CDK inhibitory and cyclin-binding. A compositionally biased stretch (basic and acidic residues) spans 78–91 (NSLERCMEEDREHN). The segment covering 93 to 102 (FLSSSDNQLL) has biased composition (polar residues). The required for activity as a cdc2 kinase inhibitor stretch occupies residues 101–230 (LLSRKKRKPT…KDENRHNLLR (130 aa)). Positions 188-199 (SRVPSSSSGSFV) are enriched in low complexity. Over residues 219 to 230 (NTKDENRHNLLR) the composition is skewed to basic and acidic residues.

Interacts with cdc13, cig2 and pop1. Phosphorylated by cig1-associated cdc2 which leads to increased stability. Phosphorylation by MAPK reduces cdc2 kinase inhibitor ability.

The protein resides in the nucleus. Regulator of cell cycle G1 phase progression. Ensures the correct sequence of S phase and mitosis in the cell by acting as an inhibitor of the cdc2 mitotic kinase. Probably interacts with cdc2 to inhibit its action until the cell mass for Start is reached. Determines the length of the pre-Start G1 period and prevents mitosis from happening in early G1 cells. Required for maintaining pheromone-induced G1 arrest. Acts as an adapter protein since interaction with cdc13 promotes cyclin proteolysis during G1. Becomes a target for degradation at the G1/S phase transition, following phosphorylation by cig1-associated cdc2 at the G1/S phase transition. The protein is Cyclin-dependent kinase inhibitor rum1 (rum1) of Schizosaccharomyces pombe (strain 972 / ATCC 24843) (Fission yeast).